Reading from the N-terminus, the 574-residue chain is Cell division cycle 7-related protein kinase (574 aa).

Ser-27 is modified (phosphoserine). The region spanning 58–574 (FKIEDKIGEG…LHPFFKDMSL (517 aa)) is the Protein kinase domain. Residues 64–72 (IGEGTFSSV) and Lys-90 contribute to the ATP site. Asp-177 (proton acceptor) is an active-site residue. A Glycyl lysine isopeptide (Lys-Gly) (interchain with G-Cter in SUMO2) cross-link involves residue Lys-268. Thr-503 carries the post-translational modification Phosphothreonine.

The protein belongs to the protein kinase superfamily. Ser/Thr protein kinase family. CDC7 subfamily. As to quaternary structure, forms a complex with either DBF4/DBF4A or DBF4B, leading to the activation of the kinase activity. Interacts with CLASPIN (via the acidic patch); the interaction is required for phosphorylation of MCM proteins and CLASPIN. Mg(2+) is required as a cofactor.

The protein resides in the nucleus. It catalyses the reaction L-seryl-[protein] + ATP = O-phospho-L-seryl-[protein] + ADP + H(+). The enzyme catalyses L-threonyl-[protein] + ATP = O-phospho-L-threonyl-[protein] + ADP + H(+). In terms of biological role, kinase involved in initiation of DNA replication. Phosphorylates critical substrates that regulate the G1/S phase transition and initiation of DNA replication, such as MCM proteins and CLASPIN. This chain is Cell division cycle 7-related protein kinase, found in Homo sapiens (Human).